The following is a 360-amino-acid chain: DNA replication and repair protein RecF (360 aa).

30-37 (GNNGSGKT) contacts ATP.

Belongs to the RecF family.

The protein localises to the cytoplasm. Functionally, the RecF protein is involved in DNA metabolism; it is required for DNA replication and normal SOS inducibility. RecF binds preferentially to single-stranded, linear DNA. It also seems to bind ATP. This is DNA replication and repair protein RecF from Mannheimia succiniciproducens (strain KCTC 0769BP / MBEL55E).